Consider the following 510-residue polypeptide: Scarecrow-like protein 29 (510 aa).

Residues 90 to 142 (LDLPPEIQQPNDQSRKRSHDGFLEAQQVKKSARSKRKAIKSSEKSSKDGNKEG) form a disordered region. Over residues 102 to 111 (QSRKRSHDGF) the composition is skewed to basic and acidic residues. The segment covering 119 to 128 (KSARSKRKAI) has biased composition (basic residues). Residues 129–142 (KSSEKSSKDGNKEG) are compositionally biased toward basic and acidic residues. Positions 136-510 (KDGNKEGRWA…EAVSFCSLWK (375 aa)) constitute a GRAS domain. The segment at 143 to 205 (RWAEKLLNPC…HLSSSSVSSS (63 aa)) is leucine repeat I (LRI). Residues 224-294 (LLKFYEVSPW…GPPPRVRITV (71 aa)) are VHIID. A VHIID motif is present at residues 259 to 263 (LHIID). Positions 312–337 (NYGSQLLGFARSLKINLQISVLDKLQ) are leucine repeat II (LRII). Residues 347 to 435 (LIVCAQFRLH…RKLMEGEATK (89 aa)) are PFYRE. Residues 438-510 (MNAGDMNEGK…EAVSFCSLWK (73 aa)) are SAW.

Belongs to the GRAS family. In terms of tissue distribution, expressed in seedlings, roots and flowers.

It localises to the nucleus. Its function is as follows. Probable transcription factor involved in plant development. The protein is Scarecrow-like protein 29 (SCL29) of Arabidopsis thaliana (Mouse-ear cress).